We begin with the raw amino-acid sequence, 373 residues long: MIKDIRTYKLCYEGINDERDALAIKGLAEHPMEIVATEIETSDGYVGYGESLAYGCSDAVQVTIEKILKPLLLKEDEELIEYLWDKMYKATLRFGRRGIAIAGISGVDTALWDIMGKKAKKPIYKLLGGSKRKVRAYITGGYYSEKKDLEKLRDEEAYYVKMGFKGIKVKIGAKSMEEDIERLKAIREVVGEDVKIAVDANNVYTFEEALEMGRRLEKLGIWFFEEPIQTDYLDLSARLAEELEVPIAGYETAYTRWEFYEIMRKRAVDIVQTDVMWTGGISEMMKIGNMAKVMGYPLIPHYSAGGISLIGNLHVAAALNSPWIEMHLRKNDLRDKIFKESIEIDNGHLVVPDRPGLGYTIRDGVFEEYKCKS.

Mg(2+) is bound by residues D199, E225, and E251.

Belongs to the mandelate racemase/muconate lactonizing enzyme family. In terms of assembly, homooctamer. Mg(2+) is required as a cofactor.

The catalysed reaction is D-arabinonate = 2-dehydro-3-deoxy-D-arabinonate + H2O. Its activity is regulated as follows. Inhibited by substrate levels above 8 mM. In terms of biological role, catalyzes the dehydration of D-arabinonate to 2-keto-3-deoxy-D-arabinonate. Participates in a pentose oxidation pathway that converts D-arabinonate to 2-oxoglutarate. This is Arabinonate dehydratase from Saccharolobus solfataricus (strain ATCC 35092 / DSM 1617 / JCM 11322 / P2) (Sulfolobus solfataricus).